The primary structure comprises 195 residues: Imidazoleglycerol-phosphate dehydratase (195 aa).

Belongs to the imidazoleglycerol-phosphate dehydratase family.

Its subcellular location is the cytoplasm. The enzyme catalyses D-erythro-1-(imidazol-4-yl)glycerol 3-phosphate = 3-(imidazol-4-yl)-2-oxopropyl phosphate + H2O. The protein operates within amino-acid biosynthesis; L-histidine biosynthesis; L-histidine from 5-phospho-alpha-D-ribose 1-diphosphate: step 6/9. The protein is Imidazoleglycerol-phosphate dehydratase of Geobacter sulfurreducens (strain ATCC 51573 / DSM 12127 / PCA).